The following is a 1085-amino-acid chain: Ankyrin repeat and IBR domain-containing protein 1 (1085 aa).

Glycine 2 carries the N-myristoyl glycine lipid modification. 2 ANK repeats span residues 45-75 (QHNT…NPNK) and 145-174 (KKNT…DLFA). The disordered stretch occupies residues 282–322 (CQRSGVQMPTPPPSGYNAWDTLPSPRTPRTTRSSVTSPDEI). The segment covering 304-319 (PSPRTPRTTRSSVTSP) has biased composition (low complexity). Positions 330–570 (DTSLCDICMC…GGYYRCTRYE (241 aa)) are TRIAD supradomain. Cysteine 334, cysteine 337, cysteine 352, histidine 354, cysteine 357, cysteine 360, cysteine 379, cysteine 384, cysteine 466, cysteine 469, histidine 474, cysteine 479, cysteine 520, and cysteine 523 together coordinate Zn(2+). The RING-type 1 zinc finger occupies 334 to 384 (CDICMCSISVFEDPVDMPCGHDFCRGCWEAFLNLKIQEGEAHNIFCPAYEC). The segment at 402–479 (DKRYLQFDIK…LGEAHEPCDC (78 aa)) adopts an IBR-type zinc-finger fold. An RING-type 2; atypical zinc finger spans residues 520–549 (CANCKSPIQKNEGCNHMQCAKCKYDFCWIC). Cysteine 533 is a catalytic residue. Cysteine 538, cysteine 541, cysteine 546, cysteine 549, histidine 556, and cysteine 566 together coordinate Zn(2+). Residues 576–641 (EEQSKEMTVE…RALKETEGGC (66 aa)) adopt a coiled-coil conformation. The residue at position 738 (serine 738) is a Phosphoserine. The disordered stretch occupies residues 764 to 808 (RRRHRQQRRRGDVHSLLSNPTDLDEPSESTFDLPEGSSGRRPGAS). Positions 846–865 (EDDPNILLAIQLSLQESGLD) constitute a UIM domain. Serine 879 and serine 906 each carry phosphoserine. Disordered regions lie at residues 884–907 (GSSL…ALSS), 921–959 (GADS…QDPS), and 1014–1085 (PPED…VHSV). The segment covering 926–959 (PFSTDTLSSRPLSETRSDFCPSSSDLDSAGQDPS) has biased composition (polar residues). Residues 1018 to 1033 (SVSKDTGVHEGERAQM) are compositionally biased toward basic and acidic residues. A compositionally biased stretch (polar residues) spans 1068 to 1085 (ASQTPQTSSDWLEQVHSV).

The protein belongs to the RBR family.

It catalyses the reaction [E2 ubiquitin-conjugating enzyme]-S-ubiquitinyl-L-cysteine + [acceptor protein]-L-lysine = [E2 ubiquitin-conjugating enzyme]-L-cysteine + [acceptor protein]-N(6)-ubiquitinyl-L-lysine.. Functionally, might act as an E3 ubiquitin-protein ligase, or as part of E3 complex, which accepts ubiquitin from specific E2 ubiquitin-conjugating enzymes and then transfers it to substrates. The chain is Ankyrin repeat and IBR domain-containing protein 1 (Ankib1) from Mus musculus (Mouse).